The primary structure comprises 107 residues: MDKREIFDALDDFSQNLMLTLAEVEAIKKNLKSVIEENTVLRLENDKLRERLGEVEKTGPSKGGGQGRENLERIYLDGFHICTDFYGQRRDNDEEECAFCNELLFRE.

4 residues coordinate Zn(2+): histidine 80, cysteine 82, cysteine 97, and cysteine 100.

The protein belongs to the YabA family. Homotetramer. Interacts with both DnaA and DnaN, acting as a bridge between these two proteins. The cofactor is Zn(2+).

It localises to the cytoplasm. Its subcellular location is the nucleoid. Functionally, involved in control of chromosome replication initiation. Inhibits the cooperative binding of DnaA to the oriC region, thus negatively regulating initiation of chromosome replication. Inhibits the ability of DnaA-ATP to form a helix on DNA; does not disassemble preformed DnaA-DNA helices. Decreases the residence time of DnaA on the chromosome at its binding sites (oriC, replication forks and promoter-binding sites). Tethers DnaA to the replication machinery via the DNA polymerase beta sliding clamp subunit (dnaN). Associates with oriC and other DnaA targets on the chromosome in a DnaA-dependent manner. The sequence is that of Replication initiation control protein YabA from Streptococcus gordonii (strain Challis / ATCC 35105 / BCRC 15272 / CH1 / DL1 / V288).